The sequence spans 583 residues: Sensor protein SrrB (583 aa).

The Cytoplasmic segment spans residues 1-11 (MMSRLNSVVIK). Residues 12–32 (LWLTIILIVTTVLILLSIALI) traverse the membrane as a helical segment. The Extracellular segment spans residues 33-174 (TFMQYYFTQE…SIEDTNNAIT (142 aa)). Residues 175–195 (IITIITAVIFLTITTVFAFFL) form a helical membrane-spanning segment. At 196 to 583 (SSRITKPLRR…TFIIKLPKPE (388 aa)) the chain is on the cytoplasmic side. In terms of domain architecture, HAMP spans 197–249 (SRITKPLRRLRDQATRVSEGDYSYKPSVTTKDEIGQLSQAFNQMSTEIEEHVD). Residues 366–583 (NVSHELRTPI…TFIIKLPKPE (218 aa)) form the Histidine kinase domain. Phosphohistidine; by autocatalysis is present on histidine 369.

Its subcellular location is the cell membrane. It catalyses the reaction ATP + protein L-histidine = ADP + protein N-phospho-L-histidine.. Functionally, member of the two-component regulatory system SrrA/SrrB, which is involved in the global regulation of staphylococcal virulence factors in response to environmental oxygen levels as well as biofilm formation. Also plays an essential role in host-derived nitric oxide resistance by regulating hmp/flavohemoglobin, an enzyme that detoxifies nitric oxide by converting it to nitrate. Functions as a sensor protein kinase which is autophosphorylated at a histidine residue and transfers its phosphate group to SrrA. In turn, SrrA binds to the upstream promoter regions of the target genes to positively and negatively regulate their expression. The chain is Sensor protein SrrB (srrB) from Staphylococcus aureus (strain Mu50 / ATCC 700699).